Here is a 308-residue protein sequence, read N- to C-terminus: MLQMIPARPSRALASLSEAYEECRQITARYAKTFYLGTLLMPEAKRQAIWAIYVWCRRTDELVDGPQAAQTNFATLDAWERRLERLFAGEPEDDCDVALVDTLARYPLDIQPFRDMIEGQRMDLLQNRYSTFEDLYTYCYRVAGTVGLMSQPVMGIESTNSRAPWDPTTPPDPTQEALALGIANQLTNILRDVGEDARRGRIYLPQEELAQFNYSEQDLFNGVIDDRWRAFMQFQLDRARDYFEQAERGIRQLSHDARWPVWASLMLYREILDVIEQNNYDVFRKRAYVPTWRKLCSLPVAMLRATVL.

This sequence belongs to the phytoene/squalene synthase family. ATP serves as cofactor. The cofactor is Mn(2+). It depends on Mg(2+) as a cofactor.

It carries out the reaction 2 (2E,6E,10E)-geranylgeranyl diphosphate = 15-cis-phytoene + 2 diphosphate. It functions in the pathway carotenoid biosynthesis; phytoene biosynthesis. Its function is as follows. Involved in the biosynthesis of carotenoids. Catalyzes the condensation of two molecules of geranylgeranyl diphosphate (GGPP) to give prephytoene diphosphate (PPPP) and the subsequent rearrangement of the cyclopropylcarbinyl intermediate to yield 15-cis-phytoene. The polypeptide is 15-cis-phytoene synthase (crtB) (Synechococcus elongatus (strain ATCC 33912 / PCC 7942 / FACHB-805) (Anacystis nidulans R2)).